Consider the following 369-residue polypeptide: 2-aminoethylphosphonate--pyruvate transaminase (369 aa).

N6-(pyridoxal phosphate)lysine is present on Lys193.

Belongs to the class-V pyridoxal-phosphate-dependent aminotransferase family. PhnW subfamily. Homodimer. The cofactor is pyridoxal 5'-phosphate.

The enzyme catalyses (2-aminoethyl)phosphonate + pyruvate = phosphonoacetaldehyde + L-alanine. Functionally, involved in phosphonate degradation. The sequence is that of 2-aminoethylphosphonate--pyruvate transaminase from Burkholderia pseudomallei (strain 1106a).